Here is a 318-residue protein sequence, read N- to C-terminus: uncharacterized protein (318 aa).

The disordered stretch occupies residues 19–63; sequence VPPDARHHEPRPGMTDHPDTGNGIGLTGRPPRAIPDPAPRSSHGP. Over residues 21 to 37 the composition is skewed to basic and acidic residues; that stretch reads PDARHHEPRPGMTDHPD. 72-79 is a binding site for ATP; sequence QKGGVGKT.

The protein belongs to the ParA family.

Its function is as follows. May play a role in septum formation. This is an uncharacterized protein from Mycobacterium tuberculosis (strain CDC 1551 / Oshkosh).